The primary structure comprises 316 residues: Beta-ketoacyl-[acyl-carrier-protein] synthase III (316 aa).

Active-site residues include cysteine 112 and histidine 243. Residues 244 to 248 (QANIR) are ACP-binding. Asparagine 273 is a catalytic residue.

The protein belongs to the thiolase-like superfamily. FabH family. Homodimer.

The protein localises to the cytoplasm. The catalysed reaction is malonyl-[ACP] + acetyl-CoA + H(+) = 3-oxobutanoyl-[ACP] + CO2 + CoA. The protein operates within lipid metabolism; fatty acid biosynthesis. Functionally, catalyzes the condensation reaction of fatty acid synthesis by the addition to an acyl acceptor of two carbons from malonyl-ACP. Catalyzes the first condensation reaction which initiates fatty acid synthesis and may therefore play a role in governing the total rate of fatty acid production. Possesses both acetoacetyl-ACP synthase and acetyl transacylase activities. Its substrate specificity determines the biosynthesis of branched-chain and/or straight-chain of fatty acids. The polypeptide is Beta-ketoacyl-[acyl-carrier-protein] synthase III (Actinobacillus pleuropneumoniae serotype 5b (strain L20)).